A 127-amino-acid chain; its full sequence is Large ribosomal subunit protein bL17 (127 aa).

The protein belongs to the bacterial ribosomal protein bL17 family. As to quaternary structure, part of the 50S ribosomal subunit. Contacts protein L32.

The protein is Large ribosomal subunit protein bL17 of Limosilactobacillus reuteri (strain DSM 20016) (Lactobacillus reuteri).